The following is a 1487-amino-acid chain: Collagen alpha-1(II) chain (1487 aa).

Positions 1–25 (MIRLGAPQSLVLLTLLIAAVLRCQG) are cleaved as a signal peptide. Residues 26–181 (QDAQEAGSCL…PGLSAGNFAA (156 aa)) constitute a propeptide, N-terminal propeptide. The region spanning 32–89 (GSCLQNGQRYKDKDVWKPSSCRICVCDTGNVLCDDIICEDPDCLNPEIPFGECCPICP) is the VWFC domain. The tract at residues 96 to 179 (SGKLGPKGQK…GPPGLSAGNF (84 aa)) is disordered. Basic and acidic residues-rich tracts occupy residues 104-115 (QKGEPGDIRDII) and 132-153 (PRGD…RDGE). A compositionally biased stretch (pro residues) spans 157–172 (PGNPGPAGPPGPPGPP). The residue at position 190 (Lys-190) is a 5-hydroxylysine. Lys-190 carries O-linked (Gal...) hydroxylysine glycosylation. The interval 191-1237 (AGGAQMGVMQ…QREKGPDPMQ (1047 aa)) is disordered. Low complexity predominate over residues 192-203 (GGAQMGVMQGPM). The interval 201-1214 (GPMGPMGPRG…PGPPGPPGPP (1014 aa)) is triple-helical region. The segment covering 208–217 (PRGPPGPAGA) has biased composition (pro residues). Positions 218–239 (PGPQGFQGNPGEPGEPGVSGPM) are enriched in low complexity. A compositionally biased stretch (basic and acidic residues) spans 251-265 (PGDDGEAGKPGKSGE). A 5-hydroxylysine mark is found at Lys-287, Lys-299, and Lys-308. O-linked (Gal...) hydroxylysine glycans are attached at residues Lys-287, Lys-299, and Lys-308. Low complexity-rich tracts occupy residues 310–320 (ESGSPGENGSP) and 335–350 (TGPA…DGQP). The span at 360–369 (GPAGGPGFPG) shows a compositional bias: gly residues. Low complexity-rich tracts occupy residues 370–382 (APGA…PTGA) and 403–431 (PAGA…AGAP). The residue at position 374 (Lys-374) is a 5-hydroxylysine. O-linked (Gal...) hydroxylysine glycosylation is present at Lys-374. Residues 433 to 442 (FPGPRGPPGP) are compositionally biased toward pro residues. A compositionally biased stretch (low complexity) spans 472–485 (ETGPAGPQGAPGPA). 5-hydroxylysine is present on residues Lys-608 and Lys-620. O-linked (Gal...) hydroxylysine glycans are attached at residues Lys-608 and Lys-620. Over residues 622–631 (LAGAPGLRGL) the composition is skewed to low complexity. 2 positions are modified to 4-hydroxyproline: Pro-659 and Pro-668. Position 670 is a 3-hydroxyproline (Pro-670). A 4-hydroxyproline mark is found at Pro-671 and Pro-674. Low complexity predominate over residues 706–736 (ERGSPGAQGLQGPRGLPGTPGTDGPKGAAGP). Basic and acidic residues predominate over residues 764-775 (KGDRGDVGEKGP). 2 stretches are compositionally biased toward low complexity: residues 833–848 (AGFA…PGAK) and 877–914 (PTGV…NGNP). Pro-907 is subject to 3-hydroxyproline. 3 positions are modified to 4-hydroxyproline: Pro-908, Pro-914, and Pro-920. Low complexity predominate over residues 962–980 (DGPSGLDGPPGPQGLAGQR). The span at 1069 to 1079 (APGPPGSPGPA) shows a compositional bias: pro residues. Residues 1115-1129 (RGDKGESGEQGERGL) are compositionally biased toward basic and acidic residues. At Pro-1144 the chain carries 3-hydroxyproline. Low complexity-rich tracts occupy residues 1148 to 1157 (SGDQGASGPA) and 1171 to 1181 (PSGKDGSNGIP). Pro-1181 carries the post-translational modification 4-hydroxyproline. Residue Pro-1186 is modified to 3-hydroxyproline. At Pro-1187 the chain carries 4-hydroxyproline. Positions 1199 to 1216 (VGPPGSPGPPGPPGPPGP) are enriched in pro residues. Position 1201 is a 3-hydroxyproline (Pro-1201). 4-hydroxyproline occurs at positions 1202 and 1205. At Pro-1207 the chain carries 3-hydroxyproline. 4-hydroxyproline occurs at positions 1208 and 1211. The residue at position 1213 (Pro-1213) is a 3-hydroxyproline. Position 1214 is a 4-hydroxyproline (Pro-1214). Residues 1215–1241 (GPGIDMSAFAGLGQREKGPDPMQYMRA) form a nonhelical region (C-terminal) region. The Fibrillar collagen NC1 domain maps to 1253-1487 (VEVDATLKSL…GVDIGPVCFL (235 aa)). 3 cysteine pairs are disulfide-bonded: Cys-1283–Cys-1315, Cys-1323–Cys-1485, and Cys-1393–Cys-1438. Ca(2+)-binding residues include Asp-1301, Asn-1303, Gln-1304, Cys-1306, and Asp-1309.

Belongs to the fibrillar collagen family. Homotrimers of alpha 1(II) chains. In terms of processing, contains mostly 4-hydroxyproline. Prolines at the third position of the tripeptide repeating unit (G-X-P) are 4-hydroxylated in some or all of the chains. Post-translationally, contains 3-hydroxyproline at a few sites. This modification occurs on the first proline residue in the sequence motif Gly-Pro-Hyp, where Hyp is 4-hydroxyproline. Lysine residues at the third position of the tripeptide repeating unit (G-X-Y) are 5-hydroxylated in some or all of the chains. In terms of processing, O-glycosylated on hydroxylated lysine residues. The O-linked glycan consists of a Glc-Gal disaccharide.

Its subcellular location is the secreted. It localises to the extracellular space. It is found in the extracellular matrix. Type II collagen is specific for cartilaginous tissues. It is essential for the normal embryonic development of the skeleton, for linear growth and for the ability of cartilage to resist compressive forces. In Mus musculus (Mouse), this protein is Collagen alpha-1(II) chain.